A 113-amino-acid chain; its full sequence is Virion membrane protein A21 homolog (113 aa).

A helical; Signal-anchor for type III membrane protein transmembrane segment spans residues 1–23 (MFVLFLIVCYFILIFNIIVPKIA). Topologically, residues 24 to 113 (DKLRLEHEAF…CERAYTELFL (90 aa)) are virion surface.

Belongs to the chordopoxvirinae A21 family. In terms of assembly, envelope protein part of a stable entry-fusion complex (EFC) which is at least composed of proteins A16, A21, A28, G3, G9, H2, J5, and L5. Formation of the viral membrane is necessary for the assembly of the complex. Post-translationally, contains two intramolecular disulfide bonds. They are created by the viral disulfide bond formation pathway, a poxvirus-specific pathway that operates on the cytoplasmic side of the MV membranes.

It is found in the virion membrane. Functionally, envelope protein part of the entry-fusion complex responsible for the virus membrane fusion with host cell membrane during virus entry. In Vertebrata (FPV), this protein is Virion membrane protein A21 homolog.